A 255-amino-acid chain; its full sequence is UPF0246 protein Cphy_1568 (255 aa).

The protein belongs to the UPF0246 family.

The sequence is that of UPF0246 protein Cphy_1568 from Lachnoclostridium phytofermentans (strain ATCC 700394 / DSM 18823 / ISDg) (Clostridium phytofermentans).